Consider the following 395-residue polypeptide: Endophilin-B2 (395 aa).

Met1 is modified (N-acetylmethionine). The membrane-binding amphipathic helix stretch occupies residues Met1–Phe27. Ser10 carries the phosphoserine modification. A BAR domain is found at Glu24 to Gly287. 2 coiled-coil regions span residues Ile116–Phe132 and Ala206–Glu240. In terms of domain architecture, SH3 spans Ser335–Ser395. Position 395 is a phosphoserine (Ser395).

This sequence belongs to the endophilin family. In terms of assembly, homodimer, and heterodimer with SH3GLB1.

The protein localises to the cytoplasm. The polypeptide is Endophilin-B2 (SH3GLB2) (Bos taurus (Bovine)).